The following is an 80-amino-acid chain: RNA-binding protein Hfq (80 aa).

In terms of domain architecture, Sm spans 10–70 (DLFLNTVRKQ…ISTIMPGQPL (61 aa)).

Belongs to the Hfq family. As to quaternary structure, homohexamer.

RNA chaperone that binds small regulatory RNA (sRNAs) and mRNAs to facilitate mRNA translational regulation in response to envelope stress, environmental stress and changes in metabolite concentrations. Also binds with high specificity to tRNAs. This Rhizobium meliloti (strain 1021) (Ensifer meliloti) protein is RNA-binding protein Hfq.